A 234-amino-acid polypeptide reads, in one-letter code: Sugar fermentation stimulation protein homolog (234 aa).

It belongs to the SfsA family.

In Shewanella baltica (strain OS195), this protein is Sugar fermentation stimulation protein homolog.